The primary structure comprises 389 residues: Odorant receptor 85c (389 aa).

Residues 1–33 lie on the Cytoplasmic side of the membrane; sequence MKFMKYAVFFYTSVGIEPYTIDSRSKKASLWSH. A helical membrane pass occupies residues 34–54; the sequence is LLFWANVINLSVIVFGEILYL. The Extracellular portion of the chain corresponds to 55–66; the sequence is GVAYSDGKFIDA. The helical transmembrane segment at 67-87 threads the bilayer; sequence VTVLSYIGFVIVGMSKMFFIW. The Cytoplasmic portion of the chain corresponds to 88 to 130; the sequence is WKKTDLSDLVKELEHIYPNGKAEEEMYRLDRYLRSCSRISITY. The chain crosses the membrane as a helical span at residues 131–151; it reads ALLYSVLIWTFNLFSIMQFLV. Residues 152 to 199 lie on the Extracellular side of the membrane; that stretch reads YEKLLKIRVVGQTLPYLMYFPWNWHENWTYYVLLFCQNFAGHTSASGQ. A glycan (N-linked (GlcNAc...) asparagine) is linked at Asn-178. The chain crosses the membrane as a helical span at residues 200–220; sequence ISTDLLLCAVATQVVMHFDYL. The Cytoplasmic portion of the chain corresponds to 221-259; sequence ARVVEKQVLDRDWSENSRFLAKTVQYHQRILRLMDVLND. A helical transmembrane segment spans residues 260–280; the sequence is IFGIPLLLNFMVSTFVICFVG. Over 281–290 the chain is Extracellular; it reads FQMTVGVPPD. A helical membrane pass occupies residues 291–311; that stretch reads IMIKLFLFLFSSLSQVYLICH. Topologically, residues 312–359 are cytoplasmic; the sequence is YGQLIADASSSLSISAYKQNWQNADIRYRRALVFFIARPQRTTYLKAT. The chain crosses the membrane as a helical span at residues 360-380; it reads IFMNITRATMTDLLQVSYKFF. Over 381-389 the chain is Extracellular; that stretch reads ALLRTMYIK.

This sequence belongs to the insect chemoreceptor superfamily. Heteromeric odorant receptor channel (TC 1.A.69) family. Or49a subfamily. In terms of assembly, interacts with Orco. Complexes exist early in the endomembrane system in olfactory sensory neurons (OSNs), coupling these complexes to the conserved ciliary trafficking pathway.

It localises to the cell membrane. In terms of biological role, odorant receptor which mediates acceptance or avoidance behavior, depending on its substrates. The odorant receptor repertoire encodes a large collection of odor stimuli that vary widely in identity, intensity, and duration. May form a complex with Orco to form odorant-sensing units, providing sensitive and prolonged odorant signaling and calcium permeability. The protein is Odorant receptor 85c (Or85c) of Drosophila melanogaster (Fruit fly).